A 491-amino-acid chain; its full sequence is Nucleoside transporter 1.2 (491 aa).

6 helical membrane-spanning segments follow: residues 27–47, 82–102, 109–129, 136–156, 173–193, and 209–229; these read FYVY…VNAV, YNLI…LSWF, VRLL…MVVP, AGAV…KSIF, STMM…QIIV, and KIYY…LILL. A compositionally biased stretch (basic and acidic residues) spans 261–273; the sequence is HTDEHPTHDKEGR. Disordered regions lie at residues 261 to 280 and 290 to 309; these read HTDE…SGKE and AAAK…PHEV. Asn-274 carries N-linked (GlcNAc...) asparagine glycosylation. 5 helical membrane passes run 333–353, 361–381, 395–415, 427–447, and 460–480; these read MFVA…GIAV, WFST…RFSP, WIIV…LLHS, VMEV…LVLG, and FVAG…GTVL.

This sequence belongs to the SLC29A/ENT transporter (TC 2.A.57) family.

The protein resides in the membrane. The catalysed reaction is adenosine(in) + H(+)(in) = adenosine(out) + H(+)(out). It carries out the reaction uridine(in) + H(+)(in) = uridine(out) + H(+)(out). Sodium-independent nucleoside:H(+) symporter; transports adenosine with high affinity and uridine with moderate affinity. Can transport cytidine and thymidine. The sequence is that of Nucleoside transporter 1.2 from Leishmania donovani.